Consider the following 1476-residue polypeptide: Membrane-associated guanylate kinase, WW and PDZ domain-containing protein 3 (1476 aa).

In terms of domain architecture, PDZ 1 spans 18-108; that stretch reads CAVSWAGPPG…PIRLKTVKPG (91 aa). The segment at 18-108 is interaction with ADRB1 and TGFA; the sequence is CAVSWAGPPG…PIRLKTVKPG (91 aa). A Guanylate kinase-like domain is found at 116 to 290; sequence RHYLSLQFQK…SSMDFRNYMM (175 aa). 123–130 provides a ligand contact to ATP; the sequence is FQKGSIDH. The disordered stretch occupies residues 184–266; the sequence is TYDGNFYGTP…ETREMHSETS (83 aa). A compositionally biased stretch (pro residues) spans 193–204; sequence PKPPAEPSPFQP. Phosphoserine is present on Ser-236. The segment covering 238 to 247 has biased composition (acidic residues); sequence LPEEEEDEDK. 2 consecutive WW domains span residues 296–329 and 342–375; these read EPLP…DPRL and GELP…NPVE. One can recognise a PDZ 2 domain in the interval 413–495; sequence RASLKKSTMG…NQYVNLTLCR (83 aa). The interval 413–495 is interaction with PTEN; sequence RASLKKSTMG…NQYVNLTLCR (83 aa). Residues 551–575 are disordered; it reads LASDRLNGPSESSEQRASLASSGSS. A compositionally biased stretch (polar residues) spans 559 to 575; that stretch reads PSESSEQRASLASSGSS. The PDZ 3 domain maps to 581 to 657; it reads TIPLIKGPKG…GADVPLLILR (77 aa). Ser-598 is modified (phosphoserine). Positions 664 to 691 are disordered; that stretch reads TKTAKTKTDTKENSGSLETINEPIPQPM. The residue at position 702 (Ser-702) is a Phosphoserine. Residues 729 to 811 form the PDZ 4 domain; the sequence is DVFLRKQESG…NGHVLLTVRR (83 aa). The segment at 729-811 is interaction with ADGRB1; that stretch reads DVFLRKQESG…NGHVLLTVRR (83 aa). A disordered region spans residues 818–844; the sequence is KQPEDESHQAFSQNGSPRLNRAELPTR. A phosphoserine mark is found at Ser-833 and Ser-916. A PDZ 5 domain is found at 852–939; it reads DVTLQRKENE…TVTLTVVAEE (88 aa). The interval 852 to 939 is interaction with LPAR2 and GRIN2B; sequence DVTLQRKENE…TVTLTVVAEE (88 aa). Residues 939-966 are disordered; that stretch reads EEHHGPPSGTNSARQSPALQHRPMGQAQ. A compositionally biased stretch (polar residues) spans 946–956; the sequence is SGTNSARQSPA. Residues 1022 to 1104 enclose the PDZ 6 domain; the sequence is PVELERGPRG…KVLLLLRPGT (83 aa). Disordered regions lie at residues 1109 to 1151 and 1168 to 1476; these read DHGD…ATED and TVQE…DKQL. Residues 1114–1123 are compositionally biased toward polar residues; it reads DTNSPSSSNV. Composition is skewed to basic and acidic residues over residues 1193 to 1211 and 1230 to 1265; these read SKKD…RLKG and RHSE…ESKG. A compositionally biased stretch (polar residues) spans 1285-1304; it reads SSSPKKQQKIGGNSLSNTEG. Composition is skewed to basic and acidic residues over residues 1317–1340 and 1350–1361; these read HPRD…KDLK and KSPEKKSSKVDE. Position 1321 is a phosphoserine (Ser-1321). Residues 1363–1373 show a composition bias toward polar residues; the sequence is SLPSKKTSSTA. Over residues 1419–1437 the composition is skewed to basic and acidic residues; the sequence is ADDHKGRESEVTDRCRERA.

Belongs to the MAGUK family. As to quaternary structure, interacts with ADRB1, ADGRB1, LPAR2/EDG4, GRIN2B, PTEN, and PTPRB. Interacts with unidentified tyrosine phosphorylated proteins. Interacts with FZD4, FZD7, TGFA and VANGL2. Interacts with DLL1. Interacts with PRRG4 (via cytoplasmic domain). As to expression, widely expressed. Colocalizes with TGFA in neurons in the cortex and dentate gyrus, as well as in ependymal cells and some astrocytes (at protein level). Present in lens epithelium.

It localises to the cell membrane. The protein resides in the cell junction. The protein localises to the tight junction. Its subcellular location is the nucleus. In terms of biological role, acts as a scaffolding protein at cell-cell junctions, thereby regulating various cellular and signaling processes. Cooperates with PTEN to modulate the kinase activity of AKT1. Its interaction with PTPRB and tyrosine phosphorylated proteins suggests that it may link receptor tyrosine phosphatase with its substrates at the plasma membrane. In polarized epithelial cells, involved in efficient trafficking of TGFA to the cell surface. Regulates the ability of LPAR2 to activate ERK and RhoA pathways. Regulates the JNK signaling cascade via its interaction with FZD4 and VANGL2. The chain is Membrane-associated guanylate kinase, WW and PDZ domain-containing protein 3 (Magi3) from Mus musculus (Mouse).